A 357-amino-acid chain; its full sequence is MNDKSSKAAASEKAKALAAALSQIEKQFGKGSIMRYGDNEVEHDIQVVSTGSLGLDIALGVGGLPRGRVIEIYGPESSGKTTLTLQVIAEMQKIGGTCAFVDAEHALDVQYAAKLGVNLTDLLISQPDTGEQALEITDALVRSGSVDLIVIDSVAALVPKAEIEGEMGDSLPGLQARLMSQALRKLTATIKRTNCMVIFINQIRMKIGVMFGNPETTTGGNALKFYSSVRLDIRRIGSIKKGEEVVGNETRVKVVKNKVSPPFKQAEFDIMYGAGISREGEIIDLGVQAGVVDKSGAWYSYSGTRIGQGKDNVREYLKEHPELAVEIENKVRENQGIVSRAATFPASEAEAEDDGQA.

74 to 81 lines the ATP pocket; it reads GPESSGKT.

This sequence belongs to the RecA family.

The protein localises to the cytoplasm. Its function is as follows. Can catalyze the hydrolysis of ATP in the presence of single-stranded DNA, the ATP-dependent uptake of single-stranded DNA by duplex DNA, and the ATP-dependent hybridization of homologous single-stranded DNAs. It interacts with LexA causing its activation and leading to its autocatalytic cleavage. The chain is Protein RecA from Bordetella petrii (strain ATCC BAA-461 / DSM 12804 / CCUG 43448).